The chain runs to 221 residues: Endo-1,4-beta-xylanase 11A (221 aa).

Positions 1–17 (MVSFTTLLTAVATAVSA) are cleaved as a signal peptide. One can recognise a GH11 domain in the interval 28-218 (RGIQPGTGVH…SSGSAEIEVR (191 aa)). N-linked (GlcNAc...) asparagine glycosylation is present at Asn-89. The active-site Nucleophile is Glu-113. Catalysis depends on Glu-205, which acts as the Proton donor.

This sequence belongs to the glycosyl hydrolase 11 (cellulase G) family.

It localises to the secreted. The catalysed reaction is Endohydrolysis of (1-&gt;4)-beta-D-xylosidic linkages in xylans.. It participates in glycan degradation; xylan degradation. Its activity is regulated as follows. Retains an activity of 52.5% in the presence of 5 mM SDS. Endo-1,4-beta-xylanase involved in the hydrolysis of xylan, a major structural heterogeneous polysaccharide found in plant biomass representing the second most abundant polysaccharide in the biosphere, after cellulose. Is an alkali-tolerant enzyme, exhibiting 50.6% of activity at pH 9.0, and 26.9% even at pH 10.0. The polypeptide is Endo-1,4-beta-xylanase 11A (Humicola insolens (Soft-rot fungus)).